Consider the following 478-residue polypeptide: Glycogen synthase (478 aa).

Lys-16 lines the ADP-alpha-D-glucose pocket.

Belongs to the glycosyltransferase 1 family. Bacterial/plant glycogen synthase subfamily.

The catalysed reaction is [(1-&gt;4)-alpha-D-glucosyl](n) + ADP-alpha-D-glucose = [(1-&gt;4)-alpha-D-glucosyl](n+1) + ADP + H(+). It functions in the pathway glycan biosynthesis; glycogen biosynthesis. In terms of biological role, synthesizes alpha-1,4-glucan chains using ADP-glucose. The chain is Glycogen synthase from Lachnospira eligens (strain ATCC 27750 / DSM 3376 / VPI C15-48 / C15-B4) (Eubacterium eligens).